Reading from the N-terminus, the 126-residue chain is Holo-[acyl-carrier-protein] synthase (126 aa).

Mg(2+)-binding residues include Asp-9 and Glu-58.

This sequence belongs to the P-Pant transferase superfamily. AcpS family. Mg(2+) is required as a cofactor.

The protein resides in the cytoplasm. The catalysed reaction is apo-[ACP] + CoA = holo-[ACP] + adenosine 3',5'-bisphosphate + H(+). Transfers the 4'-phosphopantetheine moiety from coenzyme A to a Ser of acyl-carrier-protein. The sequence is that of Holo-[acyl-carrier-protein] synthase from Citrobacter koseri (strain ATCC BAA-895 / CDC 4225-83 / SGSC4696).